The sequence spans 131 residues: Transcription antitermination protein NusB (131 aa).

It belongs to the NusB family.

Functionally, involved in transcription antitermination. Required for transcription of ribosomal RNA (rRNA) genes. Binds specifically to the boxA antiterminator sequence of the ribosomal RNA (rrn) operons. The polypeptide is Transcription antitermination protein NusB (Aliarcobacter butzleri (strain RM4018) (Arcobacter butzleri)).